Here is a 409-residue protein sequence, read N- to C-terminus: Ribose-phosphate pyrophosphokinase 1 (409 aa).

Mg(2+)-binding residues include aspartate 128, histidine 130, and aspartate 143. Serine 199 is modified (phosphoserine).

It belongs to the ribose-phosphate pyrophosphokinase family.

It is found in the cytoplasm. The catalysed reaction is D-ribose 5-phosphate + ATP = 5-phospho-alpha-D-ribose 1-diphosphate + AMP + H(+). It participates in metabolic intermediate biosynthesis; 5-phospho-alpha-D-ribose 1-diphosphate biosynthesis; 5-phospho-alpha-D-ribose 1-diphosphate from D-ribose 5-phosphate (route I): step 1/1. 5-phosphoribose 1-diphosphate synthase involved in nucleotide, histidine, and tryptophan biosynthesis. Active in heteromultimeric complexes with other 5-phosphoribose 1-diphosphate synthases. The protein is Ribose-phosphate pyrophosphokinase 1 of Schizosaccharomyces pombe (strain 972 / ATCC 24843) (Fission yeast).